The following is a 1523-amino-acid chain: Slit homolog 3 protein (1523 aa).

Positions 1–33 (MAPGRTGAGAAVRARLALALALASILSGPPAAA) are cleaved as a signal peptide. An LRRNT domain is found at 34–61 (CPTKCTCSAASVDCHGLGLRAVPRGIPR). LRR repeat units follow at residues 62-83 (NAER…DFTG), 86-107 (NLRV…AFQD), 110-131 (QLER…LFQS), 134-155 (KLTR…AFRG), 158-179 (GVKN…AFRA), and 182-203 (DLEI…SFNH). N-linked (GlcNAc...) asparagine glycosylation occurs at asparagine 72. Asparagine 192 carries an N-linked (GlcNAc...) asparagine glycan. The LRRCT 1 domain maps to 215-265 (NHLYCDCHLAWLSDWLRQRRTIGQFTLCMAPVHLRGFSVADVQKKEYVCPG). The LRRNT 2 domain maps to 271 to 307 (PACNANSLSCPSACSCSNNIVDCRGKGLTEIPANLPE). Cysteine 284 and cysteine 293 are disulfide-bonded. LRR repeat units follow at residues 308–329 (GIVE…AFIQ), 332–353 (KLKR…AFQG), 356–377 (SLTS…LFDG), 380–401 (SLQL…TFQD), and 404–425 (NLNL…LFAP). In terms of domain architecture, LRRCT 2 spans 437–487 (NPFVCDCHLKWLADYLQDNPIETSGARCSSPRRLANKRISQIKSKKFRCSG). 4 cysteine pairs are disulfide-bonded: cysteine 441-cysteine 464, cysteine 443-cysteine 485, cysteine 505-cysteine 511, and cysteine 509-cysteine 518. An LRRNT 3 domain is found at 496-532 (SSECFMDLVCPEKCRCEGTIVDCSNQKLSRIPSHLPE). LRR repeat units lie at residues 533-554 (YTTD…GIFK), 558-579 (NLRK…AFDG), 582-603 (GVQE…MFRG), 606-627 (GLKT…TFAG), and 630-651 (SVRL…AFTT). Asparagine 563 carries N-linked (GlcNAc...) asparagine glycosylation. N-linked (GlcNAc...) asparagine glycosylation occurs at asparagine 622. The region spanning 663 to 713 (NPFNCNCHMAWLGRWLRKRRIVSGNPRCQKPFFLKEIPIQDVAIQDFTCEG) is the LRRCT 3 domain. Cystine bridges form between cysteine 667–cysteine 690 and cysteine 669–cysteine 711. One can recognise an LRRNT 4 domain in the interval 716–752 (ENSCQLSPRCPEQCTCVETVVRCSNRGLHTLPKGMPK). 4 LRR repeats span residues 753–774 (DVTE…LSTF), 776–797 (QLTL…TFSN), 800–821 (HLST…AFNG), and 824–845 (SLRV…SFND). Asparagine 784, asparagine 792, and asparagine 797 each carry an N-linked (GlcNAc...) asparagine glycan. Residues 857–907 (NPLHCDCSLRWLSEWIKAGYKEPGIARCSSPESMADRLLLTTPTHRFQCKG) form the LRRCT 4 domain. EGF-like domains lie at 918–953 (NACL…KDCT), 955–994 (PINT…QRCE), 996–1032 (NPDD…ELCD), 1034–1072 (VIDY…KLCE), 1074–1110 (DNDD…LFCE), and 1119–1155 (QTSP…PRCE). Disulfide bonds link cysteine 920/cysteine 931, cysteine 925/cysteine 941, cysteine 943/cysteine 952, cysteine 959/cysteine 970, cysteine 964/cysteine 982, cysteine 984/cysteine 993, cysteine 1000/cysteine 1011, cysteine 1005/cysteine 1020, cysteine 1022/cysteine 1031, cysteine 1038/cysteine 1051, cysteine 1045/cysteine 1060, cysteine 1062/cysteine 1071, cysteine 1078/cysteine 1089, cysteine 1083/cysteine 1098, cysteine 1100/cysteine 1109, cysteine 1123/cysteine 1134, cysteine 1128/cysteine 1143, and cysteine 1145/cysteine 1154. Asparagine 928 carries an N-linked (GlcNAc...) asparagine glycan. Asparagine 1025 is a glycosylation site (N-linked (GlcNAc...) asparagine). Residues 1158–1332 (ITVNFVGKDS…PQSLGVSPGC (175 aa)) form the Laminin G-like domain. Residues asparagine 1181 and asparagine 1247 are each glycosylated (N-linked (GlcNAc...) asparagine). 5 disulfide bridges follow: cysteine 1305/cysteine 1332, cysteine 1355/cysteine 1364, cysteine 1372/cysteine 1382, cysteine 1377/cysteine 1391, and cysteine 1393/cysteine 1402. 2 consecutive EGF-like domains span residues 1340-1365 (HGLC…PLCD) and 1368-1403 (AQDP…PLCD). The N-linked (GlcNAc...) asparagine glycan is linked to asparagine 1406. The region spanning 1408–1444 (SANACSAFKCHHGQCHISDRGEPYCLCQPGFSGNHCE) is the EGF-like 9 domain. 7 disulfide bridges follow: cysteine 1412-cysteine 1422, cysteine 1417-cysteine 1432, cysteine 1434-cysteine 1443, cysteine 1449-cysteine 1487, cysteine 1467-cysteine 1501, cysteine 1478-cysteine 1517, and cysteine 1482-cysteine 1519. A CTCK domain is found at 1449–1523 (CLGEIVREAI…HLECGCRECS (75 aa)).

It is found in the secreted. May act as molecular guidance cue in cellular migration, and function may be mediated by interaction with roundabout homolog receptors. The sequence is that of Slit homolog 3 protein (Slit3) from Rattus norvegicus (Rat).